The sequence spans 79 residues: Cell division protein ZapB (79 aa).

Positions 3-79 form a coiled coil; it reads LEVFEKLEAK…QALLGRMEEV (77 aa).

Belongs to the ZapB family. In terms of assembly, homodimer. The ends of the coiled-coil dimer bind to each other, forming polymers. Interacts with FtsZ.

Its subcellular location is the cytoplasm. Non-essential, abundant cell division factor that is required for proper Z-ring formation. It is recruited early to the divisome by direct interaction with FtsZ, stimulating Z-ring assembly and thereby promoting cell division earlier in the cell cycle. Its recruitment to the Z-ring requires functional FtsA or ZipA. This is Cell division protein ZapB from Salmonella typhi.